A 419-amino-acid chain; its full sequence is UDP-N-acetylglucosamine 1-carboxyvinyltransferase 2 (419 aa).

Residue 22-23 participates in phosphoenolpyruvate binding; that stretch reads KN. UDP-N-acetyl-alpha-D-glucosamine is bound at residue Arg-92. The Proton donor role is filled by Cys-116. Cys-116 is subject to 2-(S-cysteinyl)pyruvic acid O-phosphothioketal. UDP-N-acetyl-alpha-D-glucosamine is bound by residues 121 to 125, Asp-306, and Ile-328; that span reads RPIDL.

Belongs to the EPSP synthase family. MurA subfamily.

The protein localises to the cytoplasm. The catalysed reaction is phosphoenolpyruvate + UDP-N-acetyl-alpha-D-glucosamine = UDP-N-acetyl-3-O-(1-carboxyvinyl)-alpha-D-glucosamine + phosphate. It functions in the pathway cell wall biogenesis; peptidoglycan biosynthesis. Functionally, cell wall formation. Adds enolpyruvyl to UDP-N-acetylglucosamine. The chain is UDP-N-acetylglucosamine 1-carboxyvinyltransferase 2 from Streptococcus pneumoniae (strain ATCC BAA-255 / R6).